Here is a 189-residue protein sequence, read N- to C-terminus: Ribosomal RNA large subunit methyltransferase E (189 aa).

S-adenosyl-L-methionine is bound by residues Gly-45, Phe-47, Asp-64, Asp-82, and Asp-104. Lys-144 acts as the Proton acceptor in catalysis.

It belongs to the class I-like SAM-binding methyltransferase superfamily. RNA methyltransferase RlmE family.

It localises to the cytoplasm. It carries out the reaction uridine(2552) in 23S rRNA + S-adenosyl-L-methionine = 2'-O-methyluridine(2552) in 23S rRNA + S-adenosyl-L-homocysteine + H(+). Its function is as follows. Specifically methylates the uridine in position 2552 of 23S rRNA at the 2'-O position of the ribose in the fully assembled 50S ribosomal subunit. This Borreliella afzelii (strain PKo) (Borrelia afzelii) protein is Ribosomal RNA large subunit methyltransferase E.